The primary structure comprises 287 residues: Protoheme IX farnesyltransferase (287 aa).

Transmembrane regions (helical) follow at residues 19–39 (LMVA…VTIT), 100–120 (MVLC…IVAV), 134–154 (FALL…WLAV), 162–182 (MLVV…WLHA), 212–232 (VWFH…LLEW), 233–253 (VGMR…AMLA), and 267–287 (VLCA…VSLF).

Belongs to the UbiA prenyltransferase family. Protoheme IX farnesyltransferase subfamily.

Its subcellular location is the cell inner membrane. It carries out the reaction heme b + (2E,6E)-farnesyl diphosphate + H2O = Fe(II)-heme o + diphosphate. It functions in the pathway porphyrin-containing compound metabolism; heme O biosynthesis; heme O from protoheme: step 1/1. Functionally, converts heme B (protoheme IX) to heme O by substitution of the vinyl group on carbon 2 of heme B porphyrin ring with a hydroxyethyl farnesyl side group. In Nitratidesulfovibrio vulgaris (strain ATCC 29579 / DSM 644 / CCUG 34227 / NCIMB 8303 / VKM B-1760 / Hildenborough) (Desulfovibrio vulgaris), this protein is Protoheme IX farnesyltransferase.